The following is a 152-amino-acid chain: Glutamyl-tRNA(Gln) amidotransferase subunit F, mitochondrial (152 aa).

Belongs to the GatF family. As to quaternary structure, subunit of the heterotrimeric GatFAB amidotransferase (AdT) complex, composed of A, B and F subunits.

It is found in the mitochondrion inner membrane. The enzyme catalyses L-glutamyl-tRNA(Gln) + L-glutamine + ATP + H2O = L-glutaminyl-tRNA(Gln) + L-glutamate + ADP + phosphate + H(+). Its function is as follows. Allows the formation of correctly charged Gln-tRNA(Gln) through the transamidation of misacylated Glu-tRNA(Gln) in the mitochondria. The reaction takes place in the presence of glutamine and ATP through an activated gamma-phospho-Glu-tRNA(Gln). Required for proper protein synthesis within the mitochondrion. This chain is Glutamyl-tRNA(Gln) amidotransferase subunit F, mitochondrial, found in Komagataella phaffii (strain GS115 / ATCC 20864) (Yeast).